The chain runs to 862 residues: Probable inorganic carbon transporter subunit DabA (862 aa).

Positions 365, 367, 540, and 555 each coordinate Zn(2+).

Belongs to the inorganic carbon transporter (TC 9.A.2) DabA family. In terms of assembly, forms a complex with DabB. The cofactor is Zn(2+).

Its subcellular location is the cell inner membrane. Functionally, part of an energy-coupled inorganic carbon pump. This chain is Probable inorganic carbon transporter subunit DabA, found in Vibrio cholerae serotype O1 (strain ATCC 39315 / El Tor Inaba N16961).